Consider the following 131-residue polypeptide: Increased copper sensitivity protein 3 (131 aa).

The next 2 membrane-spanning stretches (helical) occupy residues 35–55 (ISVL…IFFS) and 74–94 (IALT…IIAF).

The protein resides in the membrane. This chain is Increased copper sensitivity protein 3 (ICS3), found in Saccharomyces cerevisiae (strain ATCC 204508 / S288c) (Baker's yeast).